The chain runs to 255 residues: 5-oxoprolinase subunit A (255 aa).

It belongs to the LamB/PxpA family. As to quaternary structure, forms a complex composed of PxpA, PxpB and PxpC.

It carries out the reaction 5-oxo-L-proline + ATP + 2 H2O = L-glutamate + ADP + phosphate + H(+). Its function is as follows. Catalyzes the cleavage of 5-oxoproline to form L-glutamate coupled to the hydrolysis of ATP to ADP and inorganic phosphate. This is 5-oxoprolinase subunit A from Pyrococcus abyssi (strain GE5 / Orsay).